We begin with the raw amino-acid sequence, 943 residues long: Protein translocase subunit SecA (943 aa).

Residues Q90, 108–112 (GEGKT), and D509 each bind ATP. The disordered stretch occupies residues 537 to 556 (NEHKPPIPKQRSSKSKGGFS).

Belongs to the SecA family. Monomer and homodimer. Part of the essential Sec protein translocation apparatus which comprises SecA, SecYEG and auxiliary proteins SecDF. Other proteins may also be involved.

The protein localises to the cell inner membrane. Its subcellular location is the cellular thylakoid membrane. It is found in the cytoplasm. It catalyses the reaction ATP + H2O + cellular proteinSide 1 = ADP + phosphate + cellular proteinSide 2.. Part of the Sec protein translocase complex. Interacts with the SecYEG preprotein conducting channel. Has a central role in coupling the hydrolysis of ATP to the transfer of proteins into and across the cell membrane, serving as an ATP-driven molecular motor driving the stepwise translocation of polypeptide chains across the membrane. Functionally, probably participates in protein translocation into and across both the cytoplasmic and thylakoid membranes in cyanobacterial cells. In Prochlorococcus marinus (strain MIT 9301), this protein is Protein translocase subunit SecA.